The sequence spans 457 residues: L-asparaginase-like protein GL17509 (457 aa).

A signal peptide spans 1–20 (MRYLCRAQLLSLLLLPLLKA). 3 cysteine pairs are disulfide-bonded: Cys72/Cys78, Cys172/Cys188, and Cys327/Cys354.

It belongs to the Ntn-hydrolase family.

This chain is L-asparaginase-like protein GL17509, found in Drosophila persimilis (Fruit fly).